We begin with the raw amino-acid sequence, 80 residues long: Cortexin-3 (80 aa).

Residues 28-48 traverse the membrane as a helical segment; sequence TTFVFVILLFIFLGILIVRCF.

Belongs to the cortexin family.

It is found in the membrane. The chain is Cortexin-3 (Ctxn3) from Mus musculus (Mouse).